The primary structure comprises 418 residues: NADH-quinone oxidoreductase subunit D (418 aa).

It belongs to the complex I 49 kDa subunit family. In terms of assembly, NDH-1 is composed of 14 different subunits. Subunits NuoB, C, D, E, F, and G constitute the peripheral sector of the complex.

The protein resides in the cell inner membrane. It carries out the reaction a quinone + NADH + 5 H(+)(in) = a quinol + NAD(+) + 4 H(+)(out). NDH-1 shuttles electrons from NADH, via FMN and iron-sulfur (Fe-S) centers, to quinones in the respiratory chain. The immediate electron acceptor for the enzyme in this species is believed to be ubiquinone. Couples the redox reaction to proton translocation (for every two electrons transferred, four hydrogen ions are translocated across the cytoplasmic membrane), and thus conserves the redox energy in a proton gradient. The protein is NADH-quinone oxidoreductase subunit D of Neisseria meningitidis serogroup C (strain 053442).